Consider the following 246-residue polypeptide: tRNA pseudouridine synthase A (246 aa).

Asp-53 acts as the Nucleophile in catalysis. A substrate-binding site is contributed by Tyr-111.

It belongs to the tRNA pseudouridine synthase TruA family. In terms of assembly, homodimer.

The catalysed reaction is uridine(38/39/40) in tRNA = pseudouridine(38/39/40) in tRNA. Formation of pseudouridine at positions 38, 39 and 40 in the anticodon stem and loop of transfer RNAs. The chain is tRNA pseudouridine synthase A from Anoxybacillus flavithermus (strain DSM 21510 / WK1).